A 126-amino-acid chain; its full sequence is Large ribosomal subunit protein uL22 (126 aa).

It belongs to the universal ribosomal protein uL22 family. Part of the 50S ribosomal subunit.

This protein binds specifically to 23S rRNA; its binding is stimulated by other ribosomal proteins, e.g. L4, L17, and L20. It is important during the early stages of 50S assembly. It makes multiple contacts with different domains of the 23S rRNA in the assembled 50S subunit and ribosome. Its function is as follows. The globular domain of the protein is located near the polypeptide exit tunnel on the outside of the subunit, while an extended beta-hairpin is found that lines the wall of the exit tunnel in the center of the 70S ribosome. This is Large ribosomal subunit protein uL22 from Paracoccus denitrificans (strain Pd 1222).